A 235-amino-acid polypeptide reads, in one-letter code: Transcriptional regulatory protein MalR (235 aa).

The 117-residue stretch at 3–119 (NVLIVEDDPM…RFQTALSDYR (117 aa)) folds into the Response regulatory domain. The residue at position 54 (Asp54) is a 4-aspartylphosphate. Positions 178-197 (TEDLAKHTEISQVSIRKYLK) form a DNA-binding region, H-T-H motif.

In terms of processing, phosphorylated and activated by MalK.

The protein resides in the cytoplasm. In terms of biological role, member of a two-component regulatory system MalK/MalR. Activates transcription of maeA, maeN and yflS in presence of malate by binding to their promoter region. This chain is Transcriptional regulatory protein MalR (malR), found in Bacillus subtilis (strain 168).